The following is a 617-amino-acid chain: Proline--tRNA ligase (617 aa).

This sequence belongs to the class-II aminoacyl-tRNA synthetase family. ProS type 1 subfamily. In terms of assembly, homodimer.

It is found in the cytoplasm. The catalysed reaction is tRNA(Pro) + L-proline + ATP = L-prolyl-tRNA(Pro) + AMP + diphosphate. Its function is as follows. Catalyzes the attachment of proline to tRNA(Pro) in a two-step reaction: proline is first activated by ATP to form Pro-AMP and then transferred to the acceptor end of tRNA(Pro). As ProRS can inadvertently accommodate and process non-cognate amino acids such as alanine and cysteine, to avoid such errors it has two additional distinct editing activities against alanine. One activity is designated as 'pretransfer' editing and involves the tRNA(Pro)-independent hydrolysis of activated Ala-AMP. The other activity is designated 'posttransfer' editing and involves deacylation of mischarged Ala-tRNA(Pro). The misacylated Cys-tRNA(Pro) is not edited by ProRS. This chain is Proline--tRNA ligase, found in Streptococcus pneumoniae serotype 4 (strain ATCC BAA-334 / TIGR4).